The following is a 593-amino-acid chain: SPI-1 type 3 secretion system translocon protein SctE (593 aa).

Coiled-coil stretches lie at residues 151–208 and 287–314; these read DTAK…ATDA and EGRQ…NRIM. 2 consecutive transmembrane segments (helical) span residues 330–350 and 409–429; these read VVAA…GLAV and IVGA…VAVV.

This sequence belongs to the SctE/SipB/YopB family. As to quaternary structure, the core secretion machinery of the T3SS is composed of approximately 20 different proteins, including cytoplasmic components, a base, an export apparatus and a needle. This subunit is involved in the formation of a pore, called the translocon, in host membrane.

The protein resides in the secreted. Its subcellular location is the host membrane. In terms of biological role, component of the type III secretion system 1 (SPI-1 T3SS), also called injectisome, which is used to inject bacterial effector proteins into eukaryotic host cells. SipB/SctE1 and SipC/SctB are inserted into the host membrane where they form a pore and allow the translocation of effector proteins into the cytosol of target cells. This Salmonella dublin protein is SPI-1 type 3 secretion system translocon protein SctE.